The following is a 388-amino-acid chain: Dipeptidase verJ (388 aa).

Residues His-29, Asp-31, and Glu-142 each contribute to the Zn(2+) site. Positions 169, 243, and 300 each coordinate substrate.

Belongs to the metallo-dependent hydrolases superfamily. Peptidase M19 family. Requires Zn(2+) as cofactor.

The enzyme catalyses an L-aminoacyl-L-amino acid + H2O = 2 an L-alpha-amino acid. It participates in mycotoxin biosynthesis. In terms of biological role, dipeptidase; part of the gene cluster that mediates the biosynthesis of 11'-deoxyverticillin A, one of the dimeric epipolythiodioxopiperazines (ETPs) from the verticillin family that act as mycotoxins. 11'-deoxyverticillin A is required for normal conidiation. The nonribosomal peptide synthetase verP is speculated to be responsible for condensation of amino acids to form the carbon skeleton of verticillin, whereas the cluster-specific tailoring enzymes are involved in further modifications leading to the production of 11'-deoxyverticillin A. In Clonostachys rogersoniana, this protein is Dipeptidase verJ.